A 4421-amino-acid chain; its full sequence is Replicase polyprotein 1a (4421 aa).

Positions 54–174 (YDNHVKIDCR…HKWFQFCRLY (121 aa)) constitute a CoV Nsp1 globular domain. The BetaCoV Nsp1 C-terminal domain maps to 192-222 (FSVEAAYAEVHAEPKGKYSQKAYALLRQYRG). The 263-residue stretch at 226–488 (VLFVDQYGCD…LITHALYLDY (263 aa)) folds into the CoV Nsp2 N-terminal domain. Zn(2+) contacts are provided by Cys-365, Cys-370, Cys-386, and Cys-389. The tract at residues 365-389 (CFNDNCDFYGWVSGNMMDGFSCPLC) is C4. The region spanning 493–681 (CGNLEQNHIL…VNKFYTFFKL (189 aa)) is the CoV Nsp2 middle domain. Positions 697–809 (LKTINGLVCI…LDHAWRFPCA (113 aa)) constitute a CoV Nsp2 C-terminal domain. One can recognise a Ubiquitin-like 1 domain in the interval 811-923 (RKVNFNEKPV…MYCTFAIEDV (113 aa)). 9 consecutive repeat copies span residues 945–954 (NDDEDVVTGD), 955–964 (NDDEDVVTGD), 965–974 (NDDEDVVTGD), 975–984 (NDDEDVVTGD), 985–994 (NDDEDVVTGD), 995–1004 (NDDEDVVTGD), 1005–1014 (NDDEDVVTGD), 1015–1024 (NDDEDVVTGD), and 1025–1034 (NNDEDVVTGD). The interval 945-1034 (NDDEDVVTGD…NNDEDVVTGD (90 aa)) is 9 X 10 AA tandem repeat of N-[DN]-D-E-D-V-V-T-G-D. The interval 947–1042 (DEDVVTGDND…GDNNDEESVT (96 aa)) is disordered. A Peptidase C16 1 domain is found at 1073-1323 (VFNDVYNDAL…VCFVKGDIIN (251 aa)). Catalysis depends on Cys-1111, which acts as the For PL1-PRO activity. Zn(2+) contacts are provided by Cys-1188, Cys-1191, Cys-1214, and Cys-1216. The C4-type 1 zinc finger occupies 1188-1216 (CLKCGFSFDLNGLDAVFFYGDIVSHVCKC). Active-site for PL1-PRO activity residues include His-1262 and Asp-1273. The region spanning 1301–1472 (ELAQLYGLCI…IIQKCQITSV (172 aa)) is the Macro domain. The DPUP domain occupies 1528–1599 (NDVRDYLLSK…TVNQVCVLLA (72 aa)). A Ubiquitin-like 2 domain is found at 1599 to 1654 (AKKIDVLLTVDGVNFKSISLTVGEVFGKILGNVFCDGIDVTKLKCSDFYADKILYQ). Residues 1668–1928 (SSFGFDQQQL…MVAYNPDLSQ (261 aa)) form the Peptidase C16 2 domain. Catalysis depends on Cys-1707, which acts as the For PL2-PRO activity. Zn(2+)-binding residues include Cys-1785, Cys-1787, Cys-1819, and Cys-1821. The C4-type 2 zinc finger occupies 1785–1821 (CDCGIKQESRVGVDAVMHFGTLAKTDLFNGYKIGCNC). Residues His-1864 and Asp-1878 each act as for PL2-PRO activity in the active site. Residues 1942-2043 (IKAQFKPFAK…TYFNKPSFKS (102 aa)) enclose the Nucleic acid-binding domain. One can recognise a G2M domain in the interval 2058-2207 (ESQGNVVTSV…NDKTIFYTTE (150 aa)). Helical transmembrane passes span 2176-2196 (AIEF…LLHF), 2237-2257 (FLVV…NVIF), and 2268-2288 (FPIF…LVTI). Positions 2176-2413 (AIEFYGFLKW…FVLLRFYIVV (238 aa)) are HD1. The 62-residue stretch at 2273-2334 (GRIVMWIKAT…AIDFVQYEVD (62 aa)) folds into the 3Ecto domain. Intrachain disulfides connect Cys-2289-Cys-2313 and Cys-2304-Cys-2310. 2 helical membrane-spanning segments follow: residues 2351-2371 (LVIG…LIGL) and 2393-2413 (FIVF…YIVV). Residues 2421–2511 (GFIRHIVYGC…ELKRPVNPTD (91 aa)) are Y1. Residues 2421–2788 (GFIRHIVYGC…LTTPFSLKGG (368 aa)) enclose the CoV Nsp3 Y domain. The Zn(2+) site is built by His-2425, Cys-2430, Cys-2435, Cys-2438, Cys-2471, His-2474, Cys-2478, and Cys-2481. The segment at 2425–2438 (HIVYGCNKAGCLFC) is ZF1. The ZF2 stretch occupies residues 2471-2481 (CVKHQWNCFNC). A Y2 region spans residues 2512–2604 (ASHYVVTDIK…LVDKKLITTA (93 aa)). A coV-Y region spans residues 2512–2788 (ASHYVVTDIK…LTTPFSLKGG (277 aa)). Residues 2605–2687 (CNGISVTQIM…KSMISAVAAG (83 aa)) form a Y3 region. Positions 2688 to 2788 (LEFTDENYNN…LTTPFSLKGG (101 aa)) are Y4. The next 5 membrane-spanning stretches (helical) occupy residues 2794–2814 (LLYI…ALLP), 3069–3089 (ASSI…YYLI), 3101–3121 (VVVI…VFQV), 3128–3148 (VYAC…SVIM), and 3153–3173 (IVMY…AMVI). The tract at residues 2794 to 3173 (LLYILFFISL…FCVTYVAMVI (380 aa)) is HD2. Residues 3187–3284 (IGVNVCSDST…TASVSTSFLQ (98 aa)) form the Nsp4C domain. The Peptidase C30 domain occupies 3285-3587 (SGIVKMVSPT…YQQLAGVKLQ (303 aa)). Active-site for 3CL-PRO activity residues include His-3325 and Cys-3429. The next 7 helical transmembrane spans lie at 3601–3621 (ILIS…WTIF), 3626–3646 (THMI…MLLV), 3651–3671 (FYLT…NYLV), 3694–3714 (FTYV…IFIT), 3722–3742 (IFSL…WYFG), 3750–3770 (LLFI…SLAI), and 3793–3813 (LILL…GFFS). Residues 3601-3813 (ILISTFLFSC…ILSCYWGFFS (213 aa)) are HD3. One can recognise a RdRp Nsp7 cofactor domain in the interval 3875–3963 (SKLTDVKCAN…DYVQDSTVLQ (89 aa)). The RdRp Nsp8 cofactor domain occupies 3964–4160 (ALQSEFVNMA…YNEVANAVMQ (197 aa)). The 110-residue stretch at 4161 to 4270 (NNELMPHKLK…GTLSSTIRLQ (110 aa)) folds into the Nsp9 ssRNA-binding domain. The ExoN/MTase coactivator domain occupies 4271–4408 (AGVATEYAAN…CVGSSVAVQS (138 aa)). Residues Cys-4344, Cys-4347, His-4353, Cys-4360, Cys-4386, Cys-4389, Cys-4397, and Cys-4399 each coordinate Zn(2+). 2 zinc fingers span residues 4344 to 4360 (CIYC…DGIC) and 4386 to 4399 (CQVC…SCSC).

It belongs to the coronaviruses polyprotein 1ab family. In terms of assembly, 3CL-PRO exists as monomer and homodimer. Eight copies of nsp7 and eight copies of nsp8 assemble to form a heterohexadecamer. Nsp9 is a dimer. Nsp10 forms a dodecamer. In terms of processing, specific enzymatic cleavages in vivo by its own proteases yield mature proteins. 3CL-PRO and PL-PRO proteinases are autocatalytically processed.

The protein localises to the host membrane. It is found in the host cytoplasm. Its subcellular location is the host perinuclear region. The enzyme catalyses Thiol-dependent hydrolysis of ester, thioester, amide, peptide and isopeptide bonds formed by the C-terminal Gly of ubiquitin (a 76-residue protein attached to proteins as an intracellular targeting signal).. It catalyses the reaction TSAVLQ-|-SGFRK-NH2 and SGVTFQ-|-GKFKK the two peptides corresponding to the two self-cleavage sites of the SARS 3C-like proteinase are the two most reactive peptide substrates. The enzyme exhibits a strong preference for substrates containing Gln at P1 position and Leu at P2 position.. It carries out the reaction a 5'-end diphospho-ribonucleoside in mRNA + GTP + H(+) = a 5'-end (5'-triphosphoguanosine)-ribonucleoside in mRNA + diphosphate. In terms of biological role, the papain-like proteinase 1 (PL1-PRO) and papain-like proteinase 2 (PL2-PRO) are responsible for the cleavages located at the N-terminus of the replicase polyprotein. In addition, PLP2 possesses a deubiquitinating/deISGylating activity and processes both 'Lys-48'- and 'Lys-63'-linked polyubiquitin chains from cellular substrates. Antagonizes innate immune induction of type I interferon by blocking the phosphorylation, dimerization and subsequent nuclear translocation of host IRF-3. Functionally, responsible for the majority of cleavages as it cleaves the C-terminus of replicase polyprotein at 11 sites. Recognizes substrates containing the core sequence [ILMVF]-Q-|-[SGACN]. Inhibited by the substrate-analog Cbz-Val-Asn-Ser-Thr-Leu-Gln-CMK. Also contains an ADP-ribose-1''-phosphate (ADRP)-binding function. Its function is as follows. Nsp7-nsp8 hexadecamer may possibly confer processivity to the polymerase, maybe by binding to dsRNA or by producing primers utilized by the latter. Catalytic subunit of viral RNA capping enzyme which catalyzes the RNA guanylyltransferase reaction for genomic and sub-genomic RNAs. The kinase-like NiRAN domain of NSP12 transfers RNA to the amino terminus of NSP9, forming a covalent RNA-protein intermediate. Subsequently, the NiRAN domain transfers RNA to GDP, forming the core cap structure GpppA-RNA. The NSP14 and NSP16 methyltransferases then add methyl groups to form functional cap structures. In terms of biological role, binds to the 40S ribosomal subunit and inhibits host translation. The nsp1-40S ribosome complex further induces an endonucleolytic cleavage near the 5'UTR of host mRNAs, targeting them for degradation. By suppressing host gene expression, nsp1 facilitates efficient viral gene expression in infected cells and evasion from host immune response. In Human coronavirus HKU1 (isolate N5) (HCoV-HKU1), this protein is Replicase polyprotein 1a.